Reading from the N-terminus, the 118-residue chain is Small ribosomal subunit protein uS13 (118 aa).

Residues 94 to 118 (SLPLRGQRTKTNARTRKGPRKPIKK) are disordered.

This sequence belongs to the universal ribosomal protein uS13 family. In terms of assembly, part of the 30S ribosomal subunit. Forms a loose heterodimer with protein S19. Forms two bridges to the 50S subunit in the 70S ribosome.

In terms of biological role, located at the top of the head of the 30S subunit, it contacts several helices of the 16S rRNA. In the 70S ribosome it contacts the 23S rRNA (bridge B1a) and protein L5 of the 50S subunit (bridge B1b), connecting the 2 subunits; these bridges are implicated in subunit movement. Contacts the tRNAs in the A and P-sites. The protein is Small ribosomal subunit protein uS13 of Vibrio vulnificus (strain CMCP6).